The chain runs to 382 residues: MDTVEPINLLGLDAKALTDLVGQWGGKPFRARQLQRWVHQRSVDSFDAMTDLARDFRAQLSERAIIEALPVNIEQRSSDGTRKWLFDVGQGNAIETVFIPEDDRGTLCISSQAGCVVNCRFCSTGHQGFNRNLRTSEIIGQLWWAKRVLEADIGSARLANAGAEDTRVISNVVMMGMGEPLLNYDQVLPALRLMLDDNGYGLSRRRVTVSTSGVVPMMDRLAQDCPVALAVSLHAPNDALRDDLVPLNKKYPLKELLAACERYLAHAPRDFITFEYCMLDGINDTDQHAKELIQLARQVRCKLNLIPFNPFPASGLKRSAAPRVKVFAQRLMDAGIITTVRKTRGDDIDAACGQLAGEVKDRTRITERNAASRSIPIRQVHA.

The active-site Proton acceptor is Glu95. Residues 101–347 enclose the Radical SAM core domain; sequence EDDRGTLCIS…TTVRKTRGDD (247 aa). Cys108 and Cys352 are joined by a disulfide. [4Fe-4S] cluster contacts are provided by Cys115, Cys119, and Cys122. S-adenosyl-L-methionine is bound by residues 178 to 179, Ser210, 232 to 234, and Asn309; these read GE and SLH. Cys352 functions as the S-methylcysteine intermediate in the catalytic mechanism.

Belongs to the radical SAM superfamily. RlmN family. Requires [4Fe-4S] cluster as cofactor.

The protein localises to the cytoplasm. It carries out the reaction adenosine(2503) in 23S rRNA + 2 reduced [2Fe-2S]-[ferredoxin] + 2 S-adenosyl-L-methionine = 2-methyladenosine(2503) in 23S rRNA + 5'-deoxyadenosine + L-methionine + 2 oxidized [2Fe-2S]-[ferredoxin] + S-adenosyl-L-homocysteine. It catalyses the reaction adenosine(37) in tRNA + 2 reduced [2Fe-2S]-[ferredoxin] + 2 S-adenosyl-L-methionine = 2-methyladenosine(37) in tRNA + 5'-deoxyadenosine + L-methionine + 2 oxidized [2Fe-2S]-[ferredoxin] + S-adenosyl-L-homocysteine. Specifically methylates position 2 of adenine 2503 in 23S rRNA and position 2 of adenine 37 in tRNAs. m2A2503 modification seems to play a crucial role in the proofreading step occurring at the peptidyl transferase center and thus would serve to optimize ribosomal fidelity. The sequence is that of Dual-specificity RNA methyltransferase RlmN from Bordetella avium (strain 197N).